Consider the following 246-residue polypeptide: Ureidoacrylate amidohydrolase RutB (246 aa).

The tract at residues 1–27 is disordered; the sequence is MSAVTAAGYQAPQERSQSVTLPARPEP. Asp-41 serves as the catalytic Proton acceptor. Residue Lys-150 is part of the active site. Catalysis depends on Cys-183, which acts as the Nucleophile.

Belongs to the isochorismatase family. RutB subfamily.

The enzyme catalyses (Z)-3-ureidoacrylate + H2O + H(+) = (Z)-3-aminoacrylate + NH4(+) + CO2. It carries out the reaction (Z)-3-ureidoacrylate + H2O = (Z)-3-aminoacrylate + carbamate + H(+). It catalyses the reaction (Z)-2-methylureidoacrylate + H2O + H(+) = (Z)-2-methylaminoacrylate + NH4(+) + CO2. Functionally, hydrolyzes ureidoacrylate to form aminoacrylate and carbamate. The carbamate hydrolyzes spontaneously, thereby releasing one of the nitrogen atoms of the pyrimidine ring as ammonia and one of its carbon atoms as CO2. The protein is Ureidoacrylate amidohydrolase RutB of Rhizobium rhizogenes (strain K84 / ATCC BAA-868) (Agrobacterium radiobacter).